A 271-amino-acid chain; its full sequence is Formamidopyrimidine-DNA glycosylase (271 aa).

The Schiff-base intermediate with DNA role is filled by Pro-2. The active-site Proton donor is Glu-3. Catalysis depends on Lys-57, which acts as the Proton donor; for beta-elimination activity. DNA contacts are provided by His-90, Arg-109, and Lys-151. The segment at 236 to 270 adopts an FPG-type zinc-finger fold; the sequence is HVYSRGGETCTSCGNLLSEIRLGQRTTVFCGICQT. The active-site Proton donor; for delta-elimination activity is the Arg-260.

Belongs to the FPG family. Monomer. It depends on Zn(2+) as a cofactor.

It catalyses the reaction Hydrolysis of DNA containing ring-opened 7-methylguanine residues, releasing 2,6-diamino-4-hydroxy-5-(N-methyl)formamidopyrimidine.. It carries out the reaction 2'-deoxyribonucleotide-(2'-deoxyribose 5'-phosphate)-2'-deoxyribonucleotide-DNA = a 3'-end 2'-deoxyribonucleotide-(2,3-dehydro-2,3-deoxyribose 5'-phosphate)-DNA + a 5'-end 5'-phospho-2'-deoxyribonucleoside-DNA + H(+). Functionally, involved in base excision repair of DNA damaged by oxidation or by mutagenic agents. Acts as a DNA glycosylase that recognizes and removes damaged bases. Has a preference for oxidized purines, such as 7,8-dihydro-8-oxoguanine (8-oxoG). Has AP (apurinic/apyrimidinic) lyase activity and introduces nicks in the DNA strand. Cleaves the DNA backbone by beta-delta elimination to generate a single-strand break at the site of the removed base with both 3'- and 5'-phosphates. The chain is Formamidopyrimidine-DNA glycosylase from Shewanella baltica (strain OS195).